A 238-amino-acid chain; its full sequence is Chloride intracellular channel exl-1 (238 aa).

It belongs to the chloride channel CLIC family. As to expression, expressed in the intestine, neurons and muscles.

Its subcellular location is the cytoplasm. It localises to the membrane. The protein localises to the lysosome membrane. It is found in the golgi apparatus membrane. In terms of biological role, probable chloride channel. The sequence is that of Chloride intracellular channel exl-1 (exl-1) from Caenorhabditis elegans.